Consider the following 574-residue polypeptide: Proline--tRNA ligase (574 aa).

Belongs to the class-II aminoacyl-tRNA synthetase family. ProS type 1 subfamily. As to quaternary structure, homodimer.

The protein resides in the cytoplasm. It carries out the reaction tRNA(Pro) + L-proline + ATP = L-prolyl-tRNA(Pro) + AMP + diphosphate. Functionally, catalyzes the attachment of proline to tRNA(Pro) in a two-step reaction: proline is first activated by ATP to form Pro-AMP and then transferred to the acceptor end of tRNA(Pro). As ProRS can inadvertently accommodate and process non-cognate amino acids such as alanine and cysteine, to avoid such errors it has two additional distinct editing activities against alanine. One activity is designated as 'pretransfer' editing and involves the tRNA(Pro)-independent hydrolysis of activated Ala-AMP. The other activity is designated 'posttransfer' editing and involves deacylation of mischarged Ala-tRNA(Pro). The misacylated Cys-tRNA(Pro) is not edited by ProRS. In Buchnera aphidicola subsp. Baizongia pistaciae (strain Bp), this protein is Proline--tRNA ligase.